The primary structure comprises 209 residues: FMN-dependent NADH:quinone oxidoreductase (209 aa).

FMN-binding positions include Ser9, 19–21, and 143–146; these read SVS and TRGG.

It belongs to the azoreductase type 1 family. In terms of assembly, homodimer. Requires FMN as cofactor.

It carries out the reaction 2 a quinone + NADH + H(+) = 2 a 1,4-benzosemiquinone + NAD(+). The catalysed reaction is N,N-dimethyl-1,4-phenylenediamine + anthranilate + 2 NAD(+) = 2-(4-dimethylaminophenyl)diazenylbenzoate + 2 NADH + 2 H(+). Its function is as follows. Quinone reductase that provides resistance to thiol-specific stress caused by electrophilic quinones. In terms of biological role, also exhibits azoreductase activity. Catalyzes the reductive cleavage of the azo bond in aromatic azo compounds to the corresponding amines. The sequence is that of FMN-dependent NADH:quinone oxidoreductase from Leptothrix cholodnii (strain ATCC 51168 / LMG 8142 / SP-6) (Leptothrix discophora (strain SP-6)).